Reading from the N-terminus, the 790-residue chain is Phenylalanine--tRNA ligase beta subunit (790 aa).

Positions 39–154 (PDSLNTVVTG…ADTPLGESAC (116 aa)) constitute a tRNA-binding domain. The region spanning 404–483 (FSPLSLSVRP…FVQKTQKILP (80 aa)) is the B5 domain. Mg(2+) contacts are provided by Asp457, Asp463, Glu466, and Glu467. The FDX-ACB domain maps to 694 to 790 (PIYPASSRDI…KLANIGQGNS (97 aa)).

Belongs to the phenylalanyl-tRNA synthetase beta subunit family. Type 1 subfamily. As to quaternary structure, tetramer of two alpha and two beta subunits. It depends on Mg(2+) as a cofactor.

The protein localises to the cytoplasm. The enzyme catalyses tRNA(Phe) + L-phenylalanine + ATP = L-phenylalanyl-tRNA(Phe) + AMP + diphosphate + H(+). This is Phenylalanine--tRNA ligase beta subunit from Chlamydia trachomatis serovar A (strain ATCC VR-571B / DSM 19440 / HAR-13).